Consider the following 167-residue polypeptide: Phospholipase A and acyltransferase 1 (167 aa).

The Cytoplasmic segment spans residues 1–138 (MAVNDCFSLT…GEGVSEQANR (138 aa)). The LRAT domain maps to 20–135 (LIEVFRPCYQ…LRYGEGVSEQ (116 aa)). Histidine 30 is a catalytic residue. Cysteine 119 (acyl-thioester intermediate) is an active-site residue. The chain crosses the membrane as a helical span at residues 139 to 159 (AIGTIGLVAAGIDIFTFLGLF). Topologically, residues 160–167 (PKRQGAKS) are lumenal.

It belongs to the H-rev107 family.

Its subcellular location is the membrane. The protein resides in the cytoplasm. It is found in the nucleus. The enzyme catalyses a 1,2-diacyl-sn-glycero-3-phosphocholine + H2O = a 1-acyl-sn-glycero-3-phosphocholine + a fatty acid + H(+). It catalyses the reaction a 1,2-diacyl-sn-glycero-3-phosphocholine + H2O = a 2-acyl-sn-glycero-3-phosphocholine + a fatty acid + H(+). The catalysed reaction is 1,2-dihexadecanoyl-sn-glycero-3-phosphocholine + H2O = 2-hexadecanoyl-sn-glycero-3-phosphocholine + hexadecanoate + H(+). It carries out the reaction 1,2-dihexadecanoyl-sn-glycero-3-phosphocholine + H2O = 1-hexadecanoyl-sn-glycero-3-phosphocholine + hexadecanoate + H(+). The enzyme catalyses 1-hexadecanoyl-2-(5Z,8Z,11Z,14Z-eicosatetraenoyl)-sn-glycero-3-phosphoethanolamine + H2O = 2-(5Z,8Z,11Z,14Z)-eicosatetraenoyl-sn-glycero-3-phosphoethanolamine + hexadecanoate + H(+). It catalyses the reaction 1-hexadecanoyl-2-(5Z,8Z,11Z,14Z-eicosatetraenoyl)-sn-glycero-3-phosphoethanolamine + H2O = 1-hexadecanoyl-sn-glycero-3-phosphoethanolamine + (5Z,8Z,11Z,14Z)-eicosatetraenoate + H(+). The catalysed reaction is 1,2-di-(9Z-octadecenoyl)-sn-glycero-3-phosphoethanolamine + 1,2-dihexadecanoyl-sn-glycero-3-phosphocholine = hexadecanoyl-sn-glycero-3-phosphocholine + N-hexadecanoyl-1,2-di-(9Z-octadecenoyl)-sn-glycero-3-phosphoethanolamine + H(+). It carries out the reaction 1,2-dihexadecanoyl-sn-glycero-3-phosphocholine + a 2-acyl-sn-glycero-3-phosphocholine = a 1-hexadecanoyl-2-acyl-sn-glycero-3-phosphocholine + 2-hexadecanoyl-sn-glycero-3-phosphocholine. Its function is as follows. Exhibits both phospholipase A1/2 and acyltransferase activities. Shows phospholipase A1 (PLA1) and A2 (PLA2) activity, catalyzing the calcium-independent release of fatty acids from the sn-1 or sn-2 position of glycerophospholipids. Shows O-acyltransferase activity, catalyzing the transfer of a fatty acyl group from glycerophospholipid to the hydroxyl group of lysophospholipid. In Rattus norvegicus (Rat), this protein is Phospholipase A and acyltransferase 1.